The chain runs to 86 residues: DNA-directed RNA polymerase subunit omega (86 aa).

The protein belongs to the RNA polymerase subunit omega family. As to quaternary structure, the RNAP catalytic core consists of 2 alpha, 1 beta, 1 beta' and 1 omega subunit. When a sigma factor is associated with the core the holoenzyme is formed, which can initiate transcription.

It catalyses the reaction RNA(n) + a ribonucleoside 5'-triphosphate = RNA(n+1) + diphosphate. Promotes RNA polymerase assembly. Latches the N- and C-terminal regions of the beta' subunit thereby facilitating its interaction with the beta and alpha subunits. The chain is DNA-directed RNA polymerase subunit omega from Agathobacter rectalis (strain ATCC 33656 / DSM 3377 / JCM 17463 / KCTC 5835 / VPI 0990) (Eubacterium rectale).